We begin with the raw amino-acid sequence, 795 residues long: Protocadherin beta-5 (795 aa).

A signal peptide spans 1 to 30 (METALAKTPQKRQVMFLAILLLLWEAGSEA). At 31–689 (VRYSIPEETE…AQADSLTVYL (659 aa)) the chain is on the extracellular side. Cadherin domains are found at residues 35–133 (IPEE…APEF), 138–242 (MLLK…APEF), 247–346 (YEVQ…APEL), 351–450 (LSSP…APAF), and 455–560 (YTLF…SPFV). An N-linked (GlcNAc...) asparagine glycan is attached at N169. K296 carries the N6-acetyllysine modification. N-linked (GlcNAc...) asparagine glycans are attached at residues N417 and N435. A glycan (N-linked (GlcNAc...) asparagine) is linked at N566. The Cadherin 6 domain maps to 567 to 670 (GSAPCTELVP…LVDGFSQPYL (104 aa)). A helical membrane pass occupies residues 690–710 (VVALASVSSLFLFSVLLFVAV). The Cytoplasmic portion of the chain corresponds to 711-795 (RLCRRSRAAP…AAFRNSFGLN (85 aa)).

It is found in the cell membrane. Functionally, potential calcium-dependent cell-adhesion protein. May be involved in the establishment and maintenance of specific neuronal connections in the brain. In Homo sapiens (Human), this protein is Protocadherin beta-5 (PCDHB5).